The following is a 606-amino-acid chain: 1-deoxy-D-xylulose-5-phosphate synthase (606 aa).

Residues His-63 and 104–106 (GHS) contribute to the thiamine diphosphate site. Asp-137 contacts Mg(2+). Residues 138-139 (GS), Asn-166, Tyr-273, and Glu-354 contribute to the thiamine diphosphate site. Asn-166 lines the Mg(2+) pocket.

This sequence belongs to the transketolase family. DXPS subfamily. As to quaternary structure, homodimer. It depends on Mg(2+) as a cofactor. Thiamine diphosphate serves as cofactor.

The catalysed reaction is D-glyceraldehyde 3-phosphate + pyruvate + H(+) = 1-deoxy-D-xylulose 5-phosphate + CO2. The protein operates within metabolic intermediate biosynthesis; 1-deoxy-D-xylulose 5-phosphate biosynthesis; 1-deoxy-D-xylulose 5-phosphate from D-glyceraldehyde 3-phosphate and pyruvate: step 1/1. Its function is as follows. Catalyzes the acyloin condensation reaction between C atoms 2 and 3 of pyruvate and glyceraldehyde 3-phosphate to yield 1-deoxy-D-xylulose-5-phosphate (DXP). The polypeptide is 1-deoxy-D-xylulose-5-phosphate synthase (Sulfurimonas denitrificans (strain ATCC 33889 / DSM 1251) (Thiomicrospira denitrificans (strain ATCC 33889 / DSM 1251))).